The chain runs to 473 residues: Ribulose bisphosphate carboxylase large chain (473 aa).

The propeptide occupies 1-2 (MS). Pro-3 carries the post-translational modification N-acetylproline. An N6,N6,N6-trimethyllysine modification is found at Lys-14. 2 residues coordinate substrate: Asn-123 and Thr-173. Lys-175 acts as the Proton acceptor in catalysis. Position 177 (Lys-177) interacts with substrate. 3 residues coordinate Mg(2+): Lys-201, Asp-203, and Glu-204. N6-carboxylysine is present on Lys-201. Residue His-294 is the Proton acceptor of the active site. Substrate contacts are provided by Arg-295, His-327, and Ser-379.

This sequence belongs to the RuBisCO large chain family. Type I subfamily. As to quaternary structure, heterohexadecamer of 8 large chains and 8 small chains; disulfide-linked. The disulfide link is formed within the large subunit homodimers. Mg(2+) serves as cofactor. Post-translationally, the disulfide bond which can form in the large chain dimeric partners within the hexadecamer appears to be associated with oxidative stress and protein turnover.

It is found in the plastid. The protein localises to the chloroplast. The catalysed reaction is 2 (2R)-3-phosphoglycerate + 2 H(+) = D-ribulose 1,5-bisphosphate + CO2 + H2O. The enzyme catalyses D-ribulose 1,5-bisphosphate + O2 = 2-phosphoglycolate + (2R)-3-phosphoglycerate + 2 H(+). Functionally, ruBisCO catalyzes two reactions: the carboxylation of D-ribulose 1,5-bisphosphate, the primary event in carbon dioxide fixation, as well as the oxidative fragmentation of the pentose substrate in the photorespiration process. Both reactions occur simultaneously and in competition at the same active site. This chain is Ribulose bisphosphate carboxylase large chain, found in Sesbania sesban (Egyptian riverhemp).